Here is a 946-residue protein sequence, read N- to C-terminus: Leucine--tRNA ligase (946 aa).

Residues 43 to 53 carry the 'HIGH' region motif; it reads PYPNGTIHIGH. A 'KMSKS' region motif is present at residues 638 to 642; it reads KMSKS. Lys-641 contributes to the ATP binding site.

It belongs to the class-I aminoacyl-tRNA synthetase family.

Its subcellular location is the cytoplasm. It carries out the reaction tRNA(Leu) + L-leucine + ATP = L-leucyl-tRNA(Leu) + AMP + diphosphate. This Pyrobaculum calidifontis (strain DSM 21063 / JCM 11548 / VA1) protein is Leucine--tRNA ligase.